A 443-amino-acid chain; its full sequence is KH domain-containing, RNA-binding, signal transduction-associated protein 1 (443 aa).

The interval 1–95 (MQRRDDPAAR…LLPPSATAAA (95 aa)) is disordered. A phosphoserine mark is found at serine 18 and serine 20. An N6-acetyllysine modification is found at lysine 21. Serine 29 is modified (phosphoserine). Threonine 33 carries the phosphothreonine modification. Residues arginine 45 and arginine 52 each carry the asymmetric dimethylarginine; by PRMT1 modification. Serine 58 bears the Phosphoserine mark. Pro residues predominate over residues 61–72 (TQPPPLLPPSNP). A compositionally biased stretch (low complexity) spans 81-95 (SAPTPLLPPSATAAA). Residue threonine 84 is modified to Phosphothreonine; by MAPK1. Glycyl lysine isopeptide (Lys-Gly) (interchain with G-Cter in SUMO2) cross-links involve residues lysine 96 and lysine 102. The tract at residues 100–260 (ENKYLPELMA…VKKFLVPDMM (161 aa)) is involved in homodimerization. Residue serine 113 is modified to Phosphoserine. A Glycyl lysine isopeptide (Lys-Gly) (interchain with G-Cter in SUMO2) cross-link involves residue lysine 139. The residue at position 150 (serine 150) is a Phosphoserine. Residues 171 to 197 (NFVGKILGPQGNTIKRLQEETGAKISV) enclose the KH domain. Lysine 175 is modified (N6-acetyllysine; alternate). A Glycyl lysine isopeptide (Lys-Gly) (interchain with G-Cter in SUMO2); alternate cross-link involves residue lysine 175. At threonine 183 the chain carries Phosphothreonine. The segment at 280–317 (PSRGRGVSVRGRGAAPPPPPVPRGRGVGPPRGALVRGT) is disordered. Arginine 282, arginine 284, and arginine 291 each carry omega-N-methylarginine. Residues 283–293 (GRGVSVRGRGA) are compositionally biased toward low complexity. Position 304 is an asymmetric dimethylarginine; by PRMT1 (arginine 304). The span at 307 to 316 (GPPRGALVRG) shows a compositional bias: low complexity. 2 positions are modified to omega-N-methylarginine; by PRMT1: arginine 310 and arginine 315. Dimethylated arginine; alternate is present on arginine 320. At arginine 320 the chain carries Omega-N-methylarginine; by PRMT1; alternate. Arginine 325 bears the Omega-N-methylarginine; by PRMT1 mark. The segment at 326-345 (GATVTRGVPPPPTVRGAPTP) is disordered. Arginine 331 and arginine 340 each carry dimethylated arginine; alternate. Omega-N-methylarginine; by PRMT1; alternate is present on residues arginine 331 and arginine 340. Asymmetric dimethylarginine; alternate is present on arginine 331. An interaction with HNRNPA1 region spans residues 351-443 (GIQRIPLPPT…AYREHPYGRY (93 aa)). Position 387 is a phosphotyrosine (tyrosine 387). Serine 390 is modified (phosphoserine). An interaction with ZBTB7A region spans residues 400 to 420 (GHGELQDSYEAYGQDDWNGTR). The segment at 411–443 (YGQDDWNGTRPSLKAPPARPVKGAYREHPYGRY) is disordered. Lysine 432 participates in a covalent cross-link: Glycyl lysine isopeptide (Lys-Gly) (interchain with G-Cter in SUMO2). Over residues 434–443 (AYREHPYGRY) the composition is skewed to basic and acidic residues. Phosphotyrosine; by PTK6 is present on residues tyrosine 435, tyrosine 440, and tyrosine 443.

It belongs to the KHDRBS family. Self-associates to form homooligomers when bound to RNA, oligomerization appears to be limited when binding to proteins. Interacts with KHDRBS3/SLIM-2. Forms a trimeric complex in the nucleus consisting of BANP, HDAC6 and KHDRBS1/SAM68; HDAC6 keeps KHDRBS1 in a deacetylated state which inhibits the inclusion of CD44 alternate exons. The complex is disrupted by MAPK1/MAPK3-mediated phosphorylation of BANP which results in BANP export to the cytoplasm. This facilitates acetylation of KHDRBS1 and CD44 variant exon inclusion. Interacts with KHDRBS2/SLIM-1; heterooligomer formation of KHDRBS family proteins may modulate RNA substrate specificity. Interacts with PIK3R1, PLCG1. Interacts with RASA1, GRB2, SRC, CBP, PRMT1, APC, HNRNPA1. Interacts with PTK6 (via SH3 and SH2 domains). Forms a complex with ILF2, ILF3, YLPM1, RBMX, NCOA5 and PPP1CA. Binds WBP4/FBP21 (via WW domains), FNBP4/FBP30 (via WW domains). Interacts (via Arg/Gly-rich-flanked Pro-rich regions) with FYN (via the SH3 domain). Interacts with the non-receptor tyrosine kinase SRMS; the interaction leads to phosphorylation of KHDRBS1. Interacts with ZBTB7A; negatively regulates KHDRBS1 splicing activity toward BCL2L1. In terms of processing, tyrosine phosphorylated by several non-receptor tyrosine kinases including LCK, FYN and JAK3. Also tyrosine phosphorylated by the non-receptor tyrosine kinase SRMS in an EGF-dependent manner. Phosphorylation by PTK6 negatively regulates its RNA binding ability. Phosphorylation by PTK6 at Tyr-440 dictates the nuclear localization of KHDRBS1. Post-translationally, acetylated. Positively correlates with ability to bind RNA. Deacetylated by HDAC6; this regulates alternative splicing by inhibiting the inclusion of CD44 alternate exons. Arginine methylation is required for nuclear localization, Inhibits interaction with Src-like SH3 domains, but not interaction with WW domains of WBP4/FBP21 and FNBP4/FBP30.

It is found in the nucleus. It localises to the cytoplasm. The protein resides in the membrane. Recruited and tyrosine phosphorylated by several receptor systems, for example the T-cell, leptin and insulin receptors. Once phosphorylated, functions as an adapter protein in signal transduction cascades by binding to SH2 and SH3 domain-containing proteins. Role in G2-M progression in the cell cycle. Represses CBP-dependent transcriptional activation apparently by competing with other nuclear factors for binding to CBP. Also acts as a putative regulator of mRNA stability and/or translation rates and mediates mRNA nuclear export. Positively regulates the association of constitutive transport element (CTE)-containing mRNA with large polyribosomes and translation initiation. May not be involved in the nucleocytoplasmic export of unspliced (CTE)-containing RNA species. RNA-binding protein that plays a role in the regulation of alternative splicing and influences mRNA splice site selection and exon inclusion. Binds to RNA containing 5'-[AU]UAA-3' as a bipartite motif spaced by more than 15 nucleotides. Binds poly(A). Can regulate CD44 alternative splicing in a Ras pathway-dependent manner. In cooperation with HNRNPA1 modulates alternative splicing of BCL2L1 by promoting splicing toward isoform Bcl-X(S), and of SMN1. Can regulate alternative splicing of NRXN1 and NRXN3 in the laminin G-like domain 6 containing the evolutionary conserved neurexin alternative spliced segment 4 (AS4) involved in neurexin selective targeting to postsynaptic partners. In a neuronal activity-dependent manner cooperates synergistically with KHDRBS2/SLIM-1 in regulation of NRXN1 exon skipping at AS4. The cooperation with KHDRBS2/SLIM-1 is antagonistic for regulation of NXRN3 alternative splicing at AS4. This Rattus norvegicus (Rat) protein is KH domain-containing, RNA-binding, signal transduction-associated protein 1.